We begin with the raw amino-acid sequence, 351 residues long: Thiamine-phosphate synthase (351 aa).

The tract at residues 1–129 (MVEPYSQKEQ…AKACKQMRYQ (129 aa)) is unknown. A disordered region spans residues 65 to 85 (LRAARDTPGDPGTELTHPQEE). The tract at residues 130 to 351 (VYTLESNLMG…SQLNRIKPEL (222 aa)) is thiamine-phosphate synthase. Residues 177–181 (QYRDK) and Asn-209 contribute to the 4-amino-2-methyl-5-(diphosphooxymethyl)pyrimidine site. Mg(2+)-binding residues include Asp-210 and Asp-229. 4-amino-2-methyl-5-(diphosphooxymethyl)pyrimidine is bound at residue Ser-248. 274-276 (TPT) contributes to the 2-[(2R,5Z)-2-carboxy-4-methylthiazol-5(2H)-ylidene]ethyl phosphate binding site. Lys-277 contributes to the 4-amino-2-methyl-5-(diphosphooxymethyl)pyrimidine binding site. Residue Gly-304 participates in 2-[(2R,5Z)-2-carboxy-4-methylthiazol-5(2H)-ylidene]ethyl phosphate binding.

It belongs to the thiamine-phosphate synthase family. Mg(2+) is required as a cofactor.

The enzyme catalyses 2-[(2R,5Z)-2-carboxy-4-methylthiazol-5(2H)-ylidene]ethyl phosphate + 4-amino-2-methyl-5-(diphosphooxymethyl)pyrimidine + 2 H(+) = thiamine phosphate + CO2 + diphosphate. It carries out the reaction 2-(2-carboxy-4-methylthiazol-5-yl)ethyl phosphate + 4-amino-2-methyl-5-(diphosphooxymethyl)pyrimidine + 2 H(+) = thiamine phosphate + CO2 + diphosphate. The catalysed reaction is 4-methyl-5-(2-phosphooxyethyl)-thiazole + 4-amino-2-methyl-5-(diphosphooxymethyl)pyrimidine + H(+) = thiamine phosphate + diphosphate. It functions in the pathway cofactor biosynthesis; thiamine diphosphate biosynthesis; thiamine phosphate from 4-amino-2-methyl-5-diphosphomethylpyrimidine and 4-methyl-5-(2-phosphoethyl)-thiazole: step 1/1. Condenses 4-methyl-5-(beta-hydroxyethyl)thiazole monophosphate (THZ-P) and 2-methyl-4-amino-5-hydroxymethyl pyrimidine pyrophosphate (HMP-PP) to form thiamine monophosphate (TMP). The sequence is that of Thiamine-phosphate synthase from Nostoc punctiforme (strain ATCC 29133 / PCC 73102).